Consider the following 204-residue polypeptide: Ancillary SecYEG translocon subunit (204 aa).

Topologically, residues 1 to 23 are cytoplasmic; it reads MAYTIEEEQELTAIKAWWNENYK. The chain crosses the membrane as a helical span at residues 24–44; the sequence is FIIVCFVIAFGGVFGWNYWQS. The Periplasmic portion of the chain corresponds to 45 to 204; it reads HQIQKMHKAS…QLIQVRLNNL (160 aa).

Belongs to the YfgM family. As to quaternary structure, interacts with the SecYEG translocon. Forms a complex with PpiD.

It is found in the cell inner membrane. In terms of biological role, may mediate protein transfer from the SecYEG translocon to the periplasmic chaperone network via its periplasmic C-terminal region. The polypeptide is Ancillary SecYEG translocon subunit (1057) (Aggregatibacter actinomycetemcomitans (Actinobacillus actinomycetemcomitans)).